We begin with the raw amino-acid sequence, 296 residues long: tRNA dimethylallyltransferase (296 aa).

ATP is bound at residue 2–9 (GPTASGKT). 4 to 9 (TASGKT) is a binding site for substrate. Interaction with substrate tRNA regions lie at residues 27–30 (DSAL), 151–155 (QRLSR), and 232–237 (RCVGYR).

It belongs to the IPP transferase family. As to quaternary structure, monomer. Mg(2+) serves as cofactor.

The enzyme catalyses adenosine(37) in tRNA + dimethylallyl diphosphate = N(6)-dimethylallyladenosine(37) in tRNA + diphosphate. Its function is as follows. Catalyzes the transfer of a dimethylallyl group onto the adenine at position 37 in tRNAs that read codons beginning with uridine, leading to the formation of N6-(dimethylallyl)adenosine (i(6)A). In Shewanella sp. (strain ANA-3), this protein is tRNA dimethylallyltransferase.